Reading from the N-terminus, the 451-residue chain is Chromosomal replication initiator protein DnaA (451 aa).

The domain I, interacts with DnaA modulators stretch occupies residues 1–71; it reads MSEQEIWKKV…QTIMKDVIGY (71 aa). Residues 71-112 form a domain II region; that stretch reads YEVEPKFFTAEQLAELDETSRKSNTPSEPQRQIIEYGHEGTD. The segment at 113–329 is domain III, AAA+ region; the sequence is QFNTHNTFDT…GALTRLLAYS (217 aa). ATP-binding residues include G157, G159, K160, and T161. Residues 330–451 are domain IV, binds dsDNA; it reads KLQGRPITTE…EDLEKEIRNQ (122 aa).

It belongs to the DnaA family. Oligomerizes as a right-handed, spiral filament on DNA at oriC.

Its subcellular location is the cytoplasm. In terms of biological role, plays an essential role in the initiation and regulation of chromosomal replication. ATP-DnaA binds to the origin of replication (oriC) to initiate formation of the DNA replication initiation complex once per cell cycle. Binds the DnaA box (a 9 base pair repeat at the origin) and separates the double-stranded (ds)DNA. Forms a right-handed helical filament on oriC DNA; dsDNA binds to the exterior of the filament while single-stranded (ss)DNA is stabiized in the filament's interior. The ATP-DnaA-oriC complex binds and stabilizes one strand of the AT-rich DNA unwinding element (DUE), permitting loading of DNA polymerase. After initiation quickly degrades to an ADP-DnaA complex that is not apt for DNA replication. Binds acidic phospholipids. This chain is Chromosomal replication initiator protein DnaA, found in Staphylococcus haemolyticus (strain JCSC1435).